A 323-amino-acid chain; its full sequence is uncharacterized protein (323 aa).

Positions 1 to 45 (MLATLSQIRAWSTEHLIDAAGYWTETADRWEDVFLQMRNQAHAIA) are cleaved as a signal peptide. Residues 186-227 (FKQDGPTPPPPGAPHPSGGADGPYSDPITSMMLPPAGTEAPV) are disordered. 2 helical membrane-spanning segments follow: residues 269–289 (SAEWTAAVAGFAGSSAGVVGT) and 290–310 (ALAIPAGPADWALLGAALLGV).

Its subcellular location is the cell membrane. This is an uncharacterized protein from Mycobacterium tuberculosis (strain CDC 1551 / Oshkosh).